Consider the following 360-residue polypeptide: Photosystem II protein D1 (360 aa).

3 helical membrane-spanning segments follow: residues 29–46, 118–133, and 142–156; these read YIGW…TATS, HFFI…EWEL, and WIAV…AATA. A chlorophyll a-binding site is contributed by H118. Y126 is a pheophytin a binding site. 2 residues coordinate [CaMn4O5] cluster: D170 and E189. Residues 197–218 traverse the membrane as a helical segment; sequence FHMMGVAGVFGGSLFSAMHGSL. Residue H198 coordinates chlorophyll a. Residues H215 and 264–265 contribute to the a quinone site; that span reads SF. Fe cation is bound at residue H215. H272 contacts Fe cation. The chain crosses the membrane as a helical span at residues 274–288; that stretch reads FLALWPVVCICVTAL. The [CaMn4O5] cluster site is built by H332, E333, D342, and A344. Residues 345–360 constitute a propeptide that is removed on maturation; the sequence is SEVSLPVALNKVEING.

It belongs to the reaction center PufL/M/PsbA/D family. As to quaternary structure, PSII is composed of 1 copy each of membrane proteins PsbA, PsbB, PsbC, PsbD, PsbE, PsbF, PsbH, PsbI, PsbJ, PsbK, PsbL, PsbM, PsbT, PsbY, PsbZ, Psb30/Ycf12, at least 3 peripheral proteins of the oxygen-evolving complex and a large number of cofactors. It forms dimeric complexes. Requires The D1/D2 heterodimer binds P680, chlorophylls that are the primary electron donor of PSII, and subsequent electron acceptors. It shares a non-heme iron and each subunit binds pheophytin, quinone, additional chlorophylls, carotenoids and lipids. D1 provides most of the ligands for the Mn4-Ca-O5 cluster of the oxygen-evolving complex (OEC). There is also a Cl(-1) ion associated with D1 and D2, which is required for oxygen evolution. The PSII complex binds additional chlorophylls, carotenoids and specific lipids. as cofactor. In terms of processing, tyr-161 forms a radical intermediate that is referred to as redox-active TyrZ, YZ or Y-Z. Post-translationally, C-terminally processed by CTPA; processing is essential to allow assembly of the oxygen-evolving complex and thus photosynthetic growth.

It is found in the plastid. Its subcellular location is the chloroplast thylakoid membrane. It catalyses the reaction 2 a plastoquinone + 4 hnu + 2 H2O = 2 a plastoquinol + O2. In terms of biological role, photosystem II (PSII) is a light-driven water:plastoquinone oxidoreductase that uses light energy to abstract electrons from H(2)O, generating O(2) and a proton gradient subsequently used for ATP formation. It consists of a core antenna complex that captures photons, and an electron transfer chain that converts photonic excitation into a charge separation. The D1/D2 (PsbA/PsbD) reaction center heterodimer binds P680, the primary electron donor of PSII as well as several subsequent electron acceptors. This chain is Photosystem II protein D1, found in Galdieria sulphuraria (Red alga).